A 129-amino-acid chain; its full sequence is Small ribosomal subunit protein uS12 (129 aa).

The tract at residues 1–25 (MPTYNQLVRFGRKSKTRKTKSPALE) is disordered. Over residues 10–20 (FGRKSKTRKTK) the composition is skewed to basic residues. At aspartate 89 the chain carries 3-methylthioaspartic acid. The tract at residues 110 to 129 (RKQGRSRYGAPSKQVAVTKK) is disordered.

Belongs to the universal ribosomal protein uS12 family. As to quaternary structure, part of the 30S ribosomal subunit. Contacts proteins S8 and S17. May interact with IF1 in the 30S initiation complex.

Functionally, with S4 and S5 plays an important role in translational accuracy. Its function is as follows. Interacts with and stabilizes bases of the 16S rRNA that are involved in tRNA selection in the A site and with the mRNA backbone. Located at the interface of the 30S and 50S subunits, it traverses the body of the 30S subunit contacting proteins on the other side and probably holding the rRNA structure together. The combined cluster of proteins S8, S12 and S17 appears to hold together the shoulder and platform of the 30S subunit. This is Small ribosomal subunit protein uS12 from Rickettsia canadensis (strain McKiel).